Consider the following 630-residue polypeptide: tRNA uridine 5-carboxymethylaminomethyl modification enzyme MnmG (630 aa).

15-20 is an FAD binding site; that stretch reads GAGHAG. 274–288 contributes to the NAD(+) binding site; sequence GPRYCPSIEDKIVRF.

It belongs to the MnmG family. In terms of assembly, homodimer. Heterotetramer of two MnmE and two MnmG subunits. FAD is required as a cofactor.

The protein resides in the cytoplasm. Functionally, NAD-binding protein involved in the addition of a carboxymethylaminomethyl (cmnm) group at the wobble position (U34) of certain tRNAs, forming tRNA-cmnm(5)s(2)U34. The chain is tRNA uridine 5-carboxymethylaminomethyl modification enzyme MnmG from Alkaliphilus oremlandii (strain OhILAs) (Clostridium oremlandii (strain OhILAs)).